The chain runs to 278 residues: Small ribosomal subunit protein uS2 (278 aa).

The residue at position 2 (serine 2) is an N-acetylserine. The interval 258–278 (TNEGKTAADEWATGAQTQSNW) is disordered.

Belongs to the universal ribosomal protein uS2 family. In terms of assembly, component of the small ribosomal subunit. Mature ribosomes consist of a small (40S) and a large (60S) subunit. The 40S subunit contains about 33 different proteins and 1 molecule of RNA (18S). The 60S subunit contains about 49 different proteins and 3 molecules of RNA (28S, 5.8S and 5S). Interacts with rps-21.

The protein resides in the cytoplasm. Its function is as follows. Required for the assembly and/or stability of the 40S ribosomal subunit. Required for the processing of the 20S rRNA-precursor to mature 18S rRNA in a late step of the maturation of 40S ribosomal subunits. The sequence is that of Small ribosomal subunit protein uS2 from Caenorhabditis briggsae.